A 376-amino-acid chain; its full sequence is ATP phosphoribosyltransferase regulatory subunit (376 aa).

This sequence belongs to the class-II aminoacyl-tRNA synthetase family. HisZ subfamily. In terms of assembly, heteromultimer composed of HisG and HisZ subunits.

The protein resides in the cytoplasm. It functions in the pathway amino-acid biosynthesis; L-histidine biosynthesis; L-histidine from 5-phospho-alpha-D-ribose 1-diphosphate: step 1/9. Functionally, required for the first step of histidine biosynthesis. May allow the feedback regulation of ATP phosphoribosyltransferase activity by histidine. This chain is ATP phosphoribosyltransferase regulatory subunit, found in Brucella canis (strain ATCC 23365 / NCTC 10854 / RM-666).